A 131-amino-acid chain; its full sequence is Probable calcium-binding protein CML34 (131 aa).

4 EF-hand domains span residues 1–33 (MSAKRVFEKFDKNKDGKLSLDEFREVALAFSPY), 34–69 (FTQEDIVKFFEEIDVDGNGELNADEFTSCIEKMLKE), 70–97 (VFVFCDVDGDGKIPASESYVTMTSLGKK), and 98–131 (FTEETSAEKVRAADVDGDGYLNFDEFMALVIGDI). Aspartate 11, asparagine 13, aspartate 15, lysine 17, glutamate 22, aspartate 47, aspartate 49, asparagine 51, glutamate 53, and glutamate 58 together coordinate Ca(2+). Ca(2+)-binding residues include aspartate 111, aspartate 113, aspartate 115, tyrosine 117, and glutamate 122.

In terms of biological role, potential calcium sensor. This is Probable calcium-binding protein CML34 (CML34) from Arabidopsis thaliana (Mouse-ear cress).